The chain runs to 188 residues: Elongation factor P (188 aa).

N6-(3,6-diaminohexanoyl)-5-hydroxylysine is present on K34.

This sequence belongs to the elongation factor P family. In terms of processing, may be beta-lysylated on the epsilon-amino group of Lys-34 by the combined action of EpmA and EpmB, and then hydroxylated on the C5 position of the same residue by EpmC (if this protein is present). Lysylation is critical for the stimulatory effect of EF-P on peptide-bond formation. The lysylation moiety may extend toward the peptidyltransferase center and stabilize the terminal 3-CCA end of the tRNA. Hydroxylation of the C5 position on Lys-34 may allow additional potential stabilizing hydrogen-bond interactions with the P-tRNA.

It is found in the cytoplasm. It participates in protein biosynthesis; polypeptide chain elongation. Its function is as follows. Involved in peptide bond synthesis. Alleviates ribosome stalling that occurs when 3 or more consecutive Pro residues or the sequence PPG is present in a protein, possibly by augmenting the peptidyl transferase activity of the ribosome. Modification of Lys-34 is required for alleviation. This Hamiltonella defensa subsp. Acyrthosiphon pisum (strain 5AT) protein is Elongation factor P.